A 554-amino-acid chain; its full sequence is Dihydroxy-acid dehydratase (554 aa).

D78 contacts Mg(2+). C119 is a binding site for [2Fe-2S] cluster. Mg(2+)-binding residues include D120 and K121. K121 is modified (N6-carboxylysine). Position 192 (C192) interacts with [2Fe-2S] cluster. E443 serves as a coordination point for Mg(2+). S469 (proton acceptor) is an active-site residue.

The protein belongs to the IlvD/Edd family. As to quaternary structure, homodimer. [2Fe-2S] cluster is required as a cofactor. Requires Mg(2+) as cofactor.

It catalyses the reaction (2R)-2,3-dihydroxy-3-methylbutanoate = 3-methyl-2-oxobutanoate + H2O. It carries out the reaction (2R,3R)-2,3-dihydroxy-3-methylpentanoate = (S)-3-methyl-2-oxopentanoate + H2O. It participates in amino-acid biosynthesis; L-isoleucine biosynthesis; L-isoleucine from 2-oxobutanoate: step 3/4. Its pathway is amino-acid biosynthesis; L-valine biosynthesis; L-valine from pyruvate: step 3/4. In terms of biological role, functions in the biosynthesis of branched-chain amino acids. Catalyzes the dehydration of (2R,3R)-2,3-dihydroxy-3-methylpentanoate (2,3-dihydroxy-3-methylvalerate) into 2-oxo-3-methylpentanoate (2-oxo-3-methylvalerate) and of (2R)-2,3-dihydroxy-3-methylbutanoate (2,3-dihydroxyisovalerate) into 2-oxo-3-methylbutanoate (2-oxoisovalerate), the penultimate precursor to L-isoleucine and L-valine, respectively. The chain is Dihydroxy-acid dehydratase from Clostridium novyi (strain NT).